A 360-amino-acid polypeptide reads, in one-letter code: POU domain, class 5, transcription factor 1 (360 aa).

Disordered stretches follow at residues 1–51 (MAGH…GPGV) and 88–114 (GGLETSQPEGEAGVGVESNSDGASPEP). The 9aaTAD signature appears at 4–12 (HLTSDFAFS). Ser-111 is modified (phosphoserine; by MAPK). Lys-123 is covalently cross-linked (Glycyl lysine isopeptide (Lys-Gly) (interchain with G-Cter in SUMO)). The region spanning 138–212 (DIKALQKELE…LLQKWVEEAD (75 aa)) is the POU-specific domain. Residues Arg-157 and Gln-164 each contribute to the DNA site. 2 DNA-binding regions span residues 180–186 (SQTTICR) and 193–196 (SFKN). Positions 230–289 (RKRKRTSIENRVRGNLENLFLQCPKPTLQQISHIAQQLGLEKDVVRVWFCNRRQKGKRSS) form a DNA-binding region, homeobox. Thr-235 carries the post-translational modification Phosphothreonine. Phosphoserine is present on residues Ser-236, Ser-289, Ser-290, and Ser-355.

This sequence belongs to the POU transcription factor family. Class-5 subfamily. Interacts with PKM. Interacts with WWP2. Interacts with UBE2I and ZSCAN10. Interacts with PCGF1. Interacts with ESRRB; recruits ESRRB near the POU5F1-SOX2 element in the NANOG proximal promoter; the interaction is DNA independent. Interacts with ZNF322. Interacts with MAPK8 and MAPK9; the interaction allows MAPK8 and MAPK9 to phosphorylate POU5F1 on Ser-355. Interacts (when phosphorylated on Ser-355) with FBXW8. Interacts with FBXW4. Interacts with SOX2 and SOX15; binds synergistically with either SOX2 or SOX15 to DNA. Interacts with DDX56. In terms of processing, sumoylation enhances the protein stability, DNA binding and transactivation activity. Sumoylation is required for enhanced YES1 expression. Ubiquitinated; undergoes 'Lys-63'-linked polyubiquitination by WWP2 leading to proteasomal degradation. Post-translationally, ERK1/2-mediated phosphorylation at Ser-111 promotes nuclear exclusion and proteasomal degradation. Phosphorylation at Thr-235 and Ser-236 decrease DNA-binding and alters ability to activate transcription.

It is found in the cytoplasm. It localises to the nucleus. Transcription factor that binds to the octamer motif (5'-ATTTGCAT-3'). Forms a trimeric complex with SOX2 or SOX15 on DNA and controls the expression of a number of genes involved in embryonic development such as YES1, FGF4, UTF1 and ZFP206. Critical for early embryogenesis and for embryonic stem cell pluripotency. This chain is POU domain, class 5, transcription factor 1 (POU5F1), found in Pan troglodytes (Chimpanzee).